The primary structure comprises 508 residues: ATP synthase subunit alpha, chloroplastic (508 aa).

ATP is bound at residue Gly172–Thr179.

Belongs to the ATPase alpha/beta chains family. As to quaternary structure, F-type ATPases have 2 components, CF(1) - the catalytic core - and CF(0) - the membrane proton channel. CF(1) has five subunits: alpha(3), beta(3), gamma(1), delta(1), epsilon(1). CF(0) has four main subunits: a, b, b' and c.

It localises to the plastid. The protein localises to the chloroplast thylakoid membrane. It catalyses the reaction ATP + H2O + 4 H(+)(in) = ADP + phosphate + 5 H(+)(out). Produces ATP from ADP in the presence of a proton gradient across the membrane. The alpha chain is a regulatory subunit. The chain is ATP synthase subunit alpha, chloroplastic from Psilotum nudum (Whisk fern).